The primary structure comprises 225 residues: NAD(P)H-quinone oxidoreductase subunit K, chloroplastic (225 aa).

[4Fe-4S] cluster is bound by residues C43, C44, C108, and C139.

Belongs to the complex I 20 kDa subunit family. As to quaternary structure, NDH is composed of at least 16 different subunits, 5 of which are encoded in the nucleus. The cofactor is [4Fe-4S] cluster.

Its subcellular location is the plastid. It is found in the chloroplast thylakoid membrane. It carries out the reaction a plastoquinone + NADH + (n+1) H(+)(in) = a plastoquinol + NAD(+) + n H(+)(out). The enzyme catalyses a plastoquinone + NADPH + (n+1) H(+)(in) = a plastoquinol + NADP(+) + n H(+)(out). NDH shuttles electrons from NAD(P)H:plastoquinone, via FMN and iron-sulfur (Fe-S) centers, to quinones in the photosynthetic chain and possibly in a chloroplast respiratory chain. The immediate electron acceptor for the enzyme in this species is believed to be plastoquinone. Couples the redox reaction to proton translocation, and thus conserves the redox energy in a proton gradient. This is NAD(P)H-quinone oxidoreductase subunit K, chloroplastic from Crucihimalaya wallichii (Rock-cress).